Consider the following 105-residue polypeptide: N(4)-acetylcytidine amidohydrolase (105 aa).

Residues Thr-7 to Glu-93 form the ASCH domain. The Proton acceptor role is filled by Lys-21. Thr-24 functions as the Nucleophile in the catalytic mechanism. Glu-74 serves as the catalytic Proton donor.

Belongs to the N(4)-acetylcytidine amidohydrolase family.

The enzyme catalyses N(4)-acetylcytidine + H2O = cytidine + acetate + H(+). It carries out the reaction N(4)-acetyl-2'-deoxycytidine + H2O = 2'-deoxycytidine + acetate + H(+). The catalysed reaction is N(4)-acetylcytosine + H2O = cytosine + acetate + H(+). Catalyzes the hydrolysis of N(4)-acetylcytidine (ac4C). The protein is N(4)-acetylcytidine amidohydrolase of Shewanella baltica (strain OS155 / ATCC BAA-1091).